The following is a 453-amino-acid chain: Tubulin gamma chain (453 aa).

Residue 142–148 (AGGTGSG) participates in GTP binding.

Belongs to the tubulin family.

Its subcellular location is the cytoplasm. It localises to the cytoskeleton. It is found in the microtubule organizing center. The protein resides in the spindle pole body. Its function is as follows. Tubulin is the major constituent of microtubules. The gamma chain is found at microtubule organizing centers (MTOC) such as the spindle poles or the centrosome, suggesting that it is involved in the minus-end nucleation of microtubule assembly. The sequence is that of Tubulin gamma chain (TUB4) from Coprinopsis cinerea (strain Okayama-7 / 130 / ATCC MYA-4618 / FGSC 9003) (Inky cap fungus).